The chain runs to 192 residues: UPF0149 protein YPO0911/y3298/YP_3608 (192 aa).

This sequence belongs to the UPF0149 family.

This chain is UPF0149 protein YPO0911/y3298/YP_3608, found in Yersinia pestis.